A 103-amino-acid chain; its full sequence is Small ribosomal subunit protein bS18c (103 aa).

The protein belongs to the bacterial ribosomal protein bS18 family. As to quaternary structure, part of the 30S ribosomal subunit.

The protein localises to the plastid. Its subcellular location is the chloroplast. This is Small ribosomal subunit protein bS18c from Buxus microphylla (Littleleaf boxwood).